A 593-amino-acid chain; its full sequence is Brain-enriched guanylate kinase-associated protein (593 aa).

M1 carries the post-translational modification N-acetylmethionine. Residue Y137 is modified to Phosphotyrosine. Phosphoserine occurs at positions 200, 229, 246, 265, 346, and 373. Position 381 is an asymmetric dimethylarginine (R381). A phosphoserine mark is found at S455, S465, S475, S477, S500, S502, S506, S553, and S563. The segment at 499–593 (LSLSPGRSAD…KAQLYGTLLN (95 aa)) is disordered.

As to quaternary structure, interacts with DLG4 and DLGAP1 and forms a ternary complex.

It localises to the cytoplasm. The protein localises to the membrane. Its function is as follows. May sustain the structure of the postsynaptic density (PSD). This is Brain-enriched guanylate kinase-associated protein (BEGAIN) from Homo sapiens (Human).